The following is a 1006-amino-acid chain: Probable beta-galactosidase A (1006 aa).

The first 18 residues, 1–18 (MKLLSVCAIALLAAQAAG), serve as a signal peptide directing secretion. Residues tyrosine 96, asparagine 140, alanine 141, and glutamate 142 each coordinate substrate. The N-linked (GlcNAc...) asparagine glycan is linked to asparagine 156. Asparagine 199 lines the substrate pocket. The active-site Proton donor is the glutamate 200. Cysteine 205 and cysteine 206 are oxidised to a cystine. Substrate is bound at residue tyrosine 260. Cysteine 266 and cysteine 315 are disulfide-bonded. Glutamate 298 serves as the catalytic Nucleophile. Position 364 (tyrosine 364) interacts with substrate. Asparagine 373, asparagine 402, asparagine 422, asparagine 622, asparagine 760, asparagine 777, and asparagine 914 each carry an N-linked (GlcNAc...) asparagine glycan.

Belongs to the glycosyl hydrolase 35 family.

The protein localises to the secreted. It catalyses the reaction Hydrolysis of terminal non-reducing beta-D-galactose residues in beta-D-galactosides.. Functionally, cleaves beta-linked terminal galactosyl residues from gangliosides, glycoproteins, and glycosaminoglycans. This chain is Probable beta-galactosidase A (lacA), found in Aspergillus fumigatus (strain CBS 144.89 / FGSC A1163 / CEA10) (Neosartorya fumigata).